The sequence spans 174 residues: Putative serine protease 46 (174 aa).

Residues V43–G174 enclose the Peptidase S1 domain. A disulfide bond links C68 and C84. Catalysis depends on charge relay system residues H83 and D128.

Belongs to the peptidase S1 family.

This chain is Putative serine protease 46, found in Homo sapiens (Human).